The primary structure comprises 150 residues: UPF0260 protein CGSHiGG_00425 (150 aa).

This sequence belongs to the UPF0260 family.

The protein is UPF0260 protein CGSHiGG_00425 of Haemophilus influenzae (strain PittGG).